The following is a 361-amino-acid chain: S-adenosylmethionine decarboxylase proenzyme (361 aa).

Catalysis depends on residues E8 and E11. The active-site Schiff-base intermediate with substrate; via pyruvic acid is S68. S68 is modified (pyruvic acid (Ser); by autocatalysis). The active-site Proton donor; for catalytic activity is the C82. Active-site proton acceptor; for processing activity residues include S234 and H247. The disordered stretch occupies residues 341 to 361 (SCGSPRSTLHRCWSETENEEE).

It belongs to the eukaryotic AdoMetDC family. Requires pyruvate as cofactor. Post-translationally, is synthesized initially as an inactive proenzyme. Formation of the active enzyme involves a self-maturation process in which the active site pyruvoyl group is generated from an internal serine residue via an autocatalytic post-translational modification. Two non-identical subunits are generated from the proenzyme in this reaction, and the pyruvate is formed at the N-terminus of the alpha chain, which is derived from the carboxyl end of the proenzyme. The post-translation cleavage follows an unusual pathway, termed non-hydrolytic serinolysis, in which the side chain hydroxyl group of the serine supplies its oxygen atom to form the C-terminus of the beta chain, while the remainder of the serine residue undergoes an oxidative deamination to produce ammonia and the pyruvoyl group blocking the N-terminus of the alpha chain.

The enzyme catalyses S-adenosyl-L-methionine + H(+) = S-adenosyl 3-(methylsulfanyl)propylamine + CO2. Its pathway is amine and polyamine biosynthesis; S-adenosylmethioninamine biosynthesis; S-adenosylmethioninamine from S-adenosyl-L-methionine: step 1/1. The polypeptide is S-adenosylmethionine decarboxylase proenzyme (SAMDC) (Helianthus annuus (Common sunflower)).